A 55-amino-acid polypeptide reads, in one-letter code: Ribulose bisphosphate carboxylase large chain (55 aa).

His-18 serves as the catalytic Proton acceptor. 2 residues coordinate substrate: Arg-19 and His-27.

It belongs to the RuBisCO large chain family. Type I subfamily. In terms of assembly, heterohexadecamer of 8 large chains and 8 small chains; disulfide-linked. The disulfide link is formed within the large subunit homodimers. The cofactor is Mg(2+). The disulfide bond which can form in the large chain dimeric partners within the hexadecamer appears to be associated with oxidative stress and protein turnover.

The protein localises to the plastid. It is found in the chloroplast. It catalyses the reaction 2 (2R)-3-phosphoglycerate + 2 H(+) = D-ribulose 1,5-bisphosphate + CO2 + H2O. The enzyme catalyses D-ribulose 1,5-bisphosphate + O2 = 2-phosphoglycolate + (2R)-3-phosphoglycerate + 2 H(+). RuBisCO catalyzes two reactions: the carboxylation of D-ribulose 1,5-bisphosphate, the primary event in carbon dioxide fixation, as well as the oxidative fragmentation of the pentose substrate in the photorespiration process. Both reactions occur simultaneously and in competition at the same active site. In Vitis sp. (Grape), this protein is Ribulose bisphosphate carboxylase large chain.